A 364-amino-acid polypeptide reads, in one-letter code: Zinc finger protein CONSTANS-LIKE 12 (364 aa).

Residues Cys-5, Cys-8, Cys-28, and His-33 each coordinate Zn(2+). The B box-type 1; atypical zinc-finger motif lies at 5–47; it reads CDHCATSQALIYCKSDLAKLCLNCDVHVHSANPLSHRHIRSLI. Residues 48 to 88 form a B box-type 2; degenerate zinc finger; it reads CEKCFSQPAAIRCLDEKVSYCQGCHWHESNCSELGHRVQSL. A CCT domain is found at 280 to 322; it reads QDCGMSPGFIMSEAPWETNFEVSCPQARNEAKLRYKEKKLKRS.

Belongs to the CONSTANS family.

It is found in the nucleus. The chain is Zinc finger protein CONSTANS-LIKE 12 (COL12) from Arabidopsis thaliana (Mouse-ear cress).